Here is a 1243-residue protein sequence, read N- to C-terminus: Protein MMS22-like (1243 aa).

This sequence belongs to the MMS22 family. MMS22L subfamily. As to quaternary structure, component of the MMS22L-TONSL complex, a complex at least composed of MMS22L and TONSL/NFKBIL2. Interacts with RAD51; interaction is direct. Degraded by the ubiquitin-proteasome system upon replication stress.

It is found in the nucleus. The protein localises to the chromosome. In terms of biological role, component of the MMS22L-TONSL complex, a complex that promotes homologous recombination-mediated repair of double-strand breaks (DSBs) at stalled or collapsed replication forks. The MMS22L-TONSL complex is required to maintain genome integrity during DNA replication. It mediates the assembly of RAD51 filaments on single-stranded DNA (ssDNA): the MMS22L-TONSL complex is recruited to DSBs following histone replacement by histone chaperones and eviction of the replication protein A complex (RPA/RP-A) from DSBs. Following recruitment to DSBs, the TONSL-MMS22L complex promotes recruitment of RAD51 filaments and subsequent homologous recombination. Within the complex, MMS22L acts by binding ssDNA. The chain is Protein MMS22-like from Homo sapiens (Human).